A 287-amino-acid polypeptide reads, in one-letter code: 4-hydroxybenzoate octaprenyltransferase (287 aa).

Transmembrane regions (helical) follow at residues 19–39 (PIGS…AADG), 43–63 (LHVL…GCVI), 94–116 (LALA…PLVI), 135–155 (FFAI…PMGF), 160–180 (GEVP…AVAY), 207–227 (FDVA…GWVG), 234–254 (ALYF…YTLI), and 269–286 (NNWL…DYLI).

Belongs to the UbiA prenyltransferase family. Mg(2+) serves as cofactor.

It is found in the cell inner membrane. The enzyme catalyses all-trans-octaprenyl diphosphate + 4-hydroxybenzoate = 4-hydroxy-3-(all-trans-octaprenyl)benzoate + diphosphate. It functions in the pathway cofactor biosynthesis; ubiquinone biosynthesis. In terms of biological role, catalyzes the prenylation of para-hydroxybenzoate (PHB) with an all-trans polyprenyl group. Mediates the second step in the final reaction sequence of ubiquinone-8 (UQ-8) biosynthesis, which is the condensation of the polyisoprenoid side chain with PHB, generating the first membrane-bound Q intermediate 3-octaprenyl-4-hydroxybenzoate. This is 4-hydroxybenzoate octaprenyltransferase from Azoarcus sp. (strain BH72).